Reading from the N-terminus, the 337-residue chain is Ketol-acid reductoisomerase (NADP(+)) (337 aa).

The KARI N-terminal Rossmann domain occupies M1 to T180. NADP(+) contacts are provided by residues Y24 to Q27, R47, and S51. The active site involves H106. G132 is an NADP(+) binding site. One can recognise a KARI C-terminal knotted domain in the interval T181–I326. Residues D189, E193, E225, and E229 each contribute to the Mg(2+) site. S250 serves as a coordination point for substrate.

The protein belongs to the ketol-acid reductoisomerase family. It depends on Mg(2+) as a cofactor.

The enzyme catalyses (2R)-2,3-dihydroxy-3-methylbutanoate + NADP(+) = (2S)-2-acetolactate + NADPH + H(+). It carries out the reaction (2R,3R)-2,3-dihydroxy-3-methylpentanoate + NADP(+) = (S)-2-ethyl-2-hydroxy-3-oxobutanoate + NADPH + H(+). It functions in the pathway amino-acid biosynthesis; L-isoleucine biosynthesis; L-isoleucine from 2-oxobutanoate: step 2/4. The protein operates within amino-acid biosynthesis; L-valine biosynthesis; L-valine from pyruvate: step 2/4. Functionally, involved in the biosynthesis of branched-chain amino acids (BCAA). Catalyzes an alkyl-migration followed by a ketol-acid reduction of (S)-2-acetolactate (S2AL) to yield (R)-2,3-dihydroxy-isovalerate. In the isomerase reaction, S2AL is rearranged via a Mg-dependent methyl migration to produce 3-hydroxy-3-methyl-2-ketobutyrate (HMKB). In the reductase reaction, this 2-ketoacid undergoes a metal-dependent reduction by NADPH to yield (R)-2,3-dihydroxy-isovalerate. The polypeptide is Ketol-acid reductoisomerase (NADP(+)) (Neisseria gonorrhoeae (strain ATCC 700825 / FA 1090)).